A 437-amino-acid polypeptide reads, in one-letter code: Bifunctional protein GlmU (437 aa).

The interval 1-223 (MHNTAVILAA…WDECRGVNSR (223 aa)) is pyrophosphorylase. Residues 8–11 (LAAG), Lys-22, Gln-70, 75–76 (GT), 96–98 (YGD), Gly-135, Glu-149, Asn-164, and Asn-221 each bind UDP-N-acetyl-alpha-D-glucosamine. Asp-98 contacts Mg(2+). Asn-221 contributes to the Mg(2+) binding site. Residues 224–244 (AELAAAEAAMQSRLRAAALAA) form a linker region. Residues 245–437 (GVTMTAPETV…AELRMTKGKR (193 aa)) are N-acetyltransferase. Residues Arg-310 and Lys-328 each contribute to the UDP-N-acetyl-alpha-D-glucosamine site. Catalysis depends on His-340, which acts as the Proton acceptor. UDP-N-acetyl-alpha-D-glucosamine contacts are provided by Tyr-343 and Asn-354. Acetyl-CoA contacts are provided by residues Ala-357, 363–364 (NY), Ser-382, Ala-400, and Arg-417.

In the N-terminal section; belongs to the N-acetylglucosamine-1-phosphate uridyltransferase family. It in the C-terminal section; belongs to the transferase hexapeptide repeat family. Homotrimer. Requires Mg(2+) as cofactor.

It localises to the cytoplasm. It carries out the reaction alpha-D-glucosamine 1-phosphate + acetyl-CoA = N-acetyl-alpha-D-glucosamine 1-phosphate + CoA + H(+). It catalyses the reaction N-acetyl-alpha-D-glucosamine 1-phosphate + UTP + H(+) = UDP-N-acetyl-alpha-D-glucosamine + diphosphate. It participates in nucleotide-sugar biosynthesis; UDP-N-acetyl-alpha-D-glucosamine biosynthesis; N-acetyl-alpha-D-glucosamine 1-phosphate from alpha-D-glucosamine 6-phosphate (route II): step 2/2. Its pathway is nucleotide-sugar biosynthesis; UDP-N-acetyl-alpha-D-glucosamine biosynthesis; UDP-N-acetyl-alpha-D-glucosamine from N-acetyl-alpha-D-glucosamine 1-phosphate: step 1/1. The protein operates within bacterial outer membrane biogenesis; LPS lipid A biosynthesis. Functionally, catalyzes the last two sequential reactions in the de novo biosynthetic pathway for UDP-N-acetylglucosamine (UDP-GlcNAc). The C-terminal domain catalyzes the transfer of acetyl group from acetyl coenzyme A to glucosamine-1-phosphate (GlcN-1-P) to produce N-acetylglucosamine-1-phosphate (GlcNAc-1-P), which is converted into UDP-GlcNAc by the transfer of uridine 5-monophosphate (from uridine 5-triphosphate), a reaction catalyzed by the N-terminal domain. The polypeptide is Bifunctional protein GlmU (Acidiphilium cryptum (strain JF-5)).